A 98-amino-acid chain; its full sequence is Co-chaperonin GroES (98 aa).

Belongs to the GroES chaperonin family. In terms of assembly, heptamer of 7 subunits arranged in a ring. Interacts with the chaperonin GroEL.

The protein localises to the cytoplasm. In terms of biological role, together with the chaperonin GroEL, plays an essential role in assisting protein folding. The GroEL-GroES system forms a nano-cage that allows encapsulation of the non-native substrate proteins and provides a physical environment optimized to promote and accelerate protein folding. GroES binds to the apical surface of the GroEL ring, thereby capping the opening of the GroEL channel. In Renibacterium salmoninarum (strain ATCC 33209 / DSM 20767 / JCM 11484 / NBRC 15589 / NCIMB 2235), this protein is Co-chaperonin GroES.